The following is a 349-amino-acid chain: MKGLYFQQSSTDEEITFVFQEKEDLPVTEDNFVKLQVKACALSQINTKLLAEMKMKKDLFPVGREIAGIVLDVGSKVSFFQPDDEVVGILPLDSEDPGLCEVVRVHEHYLVHKPEKVTWTEAAGSIRDGVRAYTALHYLSHLSPGKSVLIMDGASAFGTIAIQLAHHRGAKVISTACSLEDKQCLERFRPPIARVIDVSNGKVHVAESCLEETGGLGVDIVLDAGVRLYSKDDEPAVKLQLLPHKHDIITLLGVGGHWVTTEENLQLDPPDSHCLFLKGATLAFLNDEVWNLSNVQQGKYLCILKDVMEKLSTGVFRPQLDEPIPLYEAKVSMEAVQKNQGRKKQVVQF.

Belongs to the zinc-containing alcohol dehydrogenase family. Quinone oxidoreductase subfamily. In terms of assembly, homodimer. Component of the FERRY complex composed of five subunits, TBCK, PPP1R21, FERRY3, CRYZL1 and GATD1 with a ratio of 1:2:1:2:4, respectively. In terms of tissue distribution, ubiquitous.

It localises to the early endosome. Its function is as follows. Component of the FERRY complex (Five-subunit Endosomal Rab5 and RNA/ribosome intermediary). The FERRY complex directly interacts with mRNAs and RAB5A, and functions as a RAB5A effector involved in the localization and the distribution of specific mRNAs most likely by mediating their endosomal transport. The complex recruits mRNAs and ribosomes to early endosomes through direct mRNA-interaction. The chain is Quinone oxidoreductase-like protein 1 (CRYZL1) from Homo sapiens (Human).